The following is a 112-amino-acid chain: 87 kDa annexin-binding protein (112 aa).

In terms of assembly, binds annexin.

The sequence is that of 87 kDa annexin-binding protein from Physarum polycephalum (Slime mold).